The primary structure comprises 159 residues: Ribosomal RNA large subunit methyltransferase H (159 aa).

S-adenosyl-L-methionine contacts are provided by leucine 76 and glycine 108.

The protein belongs to the RNA methyltransferase RlmH family. Homodimer.

The protein resides in the cytoplasm. It carries out the reaction pseudouridine(1915) in 23S rRNA + S-adenosyl-L-methionine = N(3)-methylpseudouridine(1915) in 23S rRNA + S-adenosyl-L-homocysteine + H(+). Functionally, specifically methylates the pseudouridine at position 1915 (m3Psi1915) in 23S rRNA. The chain is Ribosomal RNA large subunit methyltransferase H from Limosilactobacillus reuteri (strain DSM 20016) (Lactobacillus reuteri).